Reading from the N-terminus, the 622-residue chain is SLAIN motif-containing protein-like (622 aa).

Residues 34 to 60 (DLKEVQKLHELVKRLEIQNQQLKIKRN) are a coiled coil. Disordered regions lie at residues 404–441 (HRYS…IQNH) and 473–622 (VRSS…DGCY). A compositionally biased stretch (low complexity) spans 405-415 (RYSPSPLSSPR). Composition is skewed to polar residues over residues 416–430 (CQSP…TTSR), 484–502 (QGPS…STPP), 525–591 (VSTS…STVP), and 599–611 (SRRS…MNST).

This sequence belongs to the SLAIN motif-containing family.

This is SLAIN motif-containing protein-like from Xenopus tropicalis (Western clawed frog).